Consider the following 325-residue polypeptide: GMP reductase (325 aa).

The Thioimidate intermediate role is filled by Cys174. 203–226 lines the NADP(+) pocket; it reads IIADGGIRTHGDIAKSIRFGATMV.

Belongs to the IMPDH/GMPR family. GuaC type 2 subfamily.

It carries out the reaction IMP + NH4(+) + NADP(+) = GMP + NADPH + 2 H(+). In terms of biological role, catalyzes the irreversible NADPH-dependent deamination of GMP to IMP. It functions in the conversion of nucleobase, nucleoside and nucleotide derivatives of G to A nucleotides, and in maintaining the intracellular balance of A and G nucleotides. The sequence is that of GMP reductase from Helicobacter pylori (strain G27).